Here is a 179-residue protein sequence, read N- to C-terminus: Adaptation to cold protein A (179 aa).

The interval 133-179 (KATPAPKRSADDDFEDEDSDYADYSDDDDDEGEEEDGYYDHYDDEDR) is disordered. Residues 144–179 (DDFEDEDSDYADYSDDDDDEGEEEDGYYDHYDDEDR) show a composition bias toward acidic residues.

Its function is as follows. Part of an operon involved in cold adaptation. The polypeptide is Adaptation to cold protein A (Shewanella oneidensis (strain ATCC 700550 / JCM 31522 / CIP 106686 / LMG 19005 / NCIMB 14063 / MR-1)).